A 635-amino-acid polypeptide reads, in one-letter code: 5-aminolevulinate synthase, non-specific, mitochondrial (635 aa).

A mitochondrion-targeting transit peptide spans 1–56 (MEAVVRRCPFLARVSQAFLQKAGPSLLFYAQHCPKMMEAAPPAAARGLATSASRGQ). The span at 44–66 (AARGLATSASRGQQVEETPAAQP) shows a compositional bias: low complexity. The segment at 44–94 (AARGLATSASRGQQVEETPAAQPEAKKAKEVAQQNTDGSQPPAGHPPAAAV) is disordered. The substrate site is built by arginine 212, serine 329, and lysine 348. The pyridoxal 5'-phosphate site is built by serine 381, histidine 409, and threonine 437. Lysine 440 is a catalytic residue. An N6-(pyridoxal phosphate)lysine modification is found at lysine 440. Pyridoxal 5'-phosphate-binding residues include threonine 469 and threonine 470. Threonine 557 contributes to the substrate binding site.

It belongs to the class-II pyridoxal-phosphate-dependent aminotransferase family. In terms of assembly, homodimer. Requires pyridoxal 5'-phosphate as cofactor. Ubiquitous.

It localises to the mitochondrion inner membrane. The enzyme catalyses succinyl-CoA + glycine + H(+) = 5-aminolevulinate + CO2 + CoA. The protein operates within porphyrin-containing compound metabolism; protoporphyrin-IX biosynthesis; 5-aminolevulinate from glycine: step 1/1. Catalyzes the pyridoxal 5'-phosphate (PLP)-dependent condensation of succinyl-CoA and glycine to form aminolevulinic acid (ALA), with CoA and CO2 as by-products. The sequence is that of 5-aminolevulinate synthase, non-specific, mitochondrial (ALAS1) from Gallus gallus (Chicken).